Consider the following 415-residue polypeptide: MGKFLIKGGNPLKGKIKVSGAKNAALPIITAALLADTPSKLIDIPHLRDVTNLCNILEKMGAGVEFENNIVSIDPTTLTEAEADPELARKLRASYYILGVLLAKEGWARTSLPGGCNIGNRPIDLHLKGFKALGADVKLDHGIVEVKANKLKGARIYLDYPSVGATINIMLAATRAEGKTVIENAAREPEIVDLANYLTVMGAKIKGVGTDIIKIEGVDSLKGAEHRIIPDRIEAGTYMIAAALNKGDVFVDNVLAEHLKSLIAKLKEMGIQIKEEISGIKVVSNDKLKAVDVKTLPYPGFPTDLQSQIMVLLTQAEGTSLVIETVWENRFMHVDELKRMGADIKIDGHSALIKPSQLTGAEVTATDLRAGAALILAGLVAEGETEVRNINHVERGYEDIEEKLSGIGADIRKVK.

Lys-22–Asn-23 contributes to the phosphoenolpyruvate binding site. Residue Arg-92 participates in UDP-N-acetyl-alpha-D-glucosamine binding. Catalysis depends on Cys-116, which acts as the Proton donor. Cys-116 carries the 2-(S-cysteinyl)pyruvic acid O-phosphothioketal modification. UDP-N-acetyl-alpha-D-glucosamine-binding positions include Arg-121–Leu-125, Asp-304, and Val-326.

Belongs to the EPSP synthase family. MurA subfamily.

The protein resides in the cytoplasm. It carries out the reaction phosphoenolpyruvate + UDP-N-acetyl-alpha-D-glucosamine = UDP-N-acetyl-3-O-(1-carboxyvinyl)-alpha-D-glucosamine + phosphate. It functions in the pathway cell wall biogenesis; peptidoglycan biosynthesis. Cell wall formation. Adds enolpyruvyl to UDP-N-acetylglucosamine. This chain is UDP-N-acetylglucosamine 1-carboxyvinyltransferase, found in Halothermothrix orenii (strain H 168 / OCM 544 / DSM 9562).